Reading from the N-terminus, the 82-residue chain is Small ribosomal subunit protein uS17 (82 aa).

The protein belongs to the universal ribosomal protein uS17 family. In terms of assembly, part of the 30S ribosomal subunit.

Functionally, one of the primary rRNA binding proteins, it binds specifically to the 5'-end of 16S ribosomal RNA. In Nitrobacter hamburgensis (strain DSM 10229 / NCIMB 13809 / X14), this protein is Small ribosomal subunit protein uS17.